A 611-amino-acid chain; its full sequence is Sensor histidine kinase WalK (611 aa).

Residues 1 to 13 (MNKVGFFRSIQFK) are Cytoplasmic-facing. A helical membrane pass occupies residues 14-34 (ITLIYVLLIIIAMQIIGVYFV). Over 35-182 (NQVEKSLISS…VFNQMKTINT (148 aa)) the chain is Extracellular. The chain crosses the membrane as a helical span at residues 183–203 (ILASGTGLALVLTALLGIFLA). Residues 204–256 (RTITHPLSDMRKQAMELAKGNFSRKVKKYGHDEIGQLATTFNHLTRELEDAQA) form the HAMP domain. The Cytoplasmic segment spans residues 204-611 (RTITHPLSDM…EEQEDDWDEA (408 aa)). A PAS domain is found at 263-324 (RKLASVIAYM…QENYTFEDLV (62 aa)). The region spanning 325–379 (EQQDSMLLEIERDDELTVLRVNFSVIQREHGKIDGLIAVIYDVTEQEKMDQERRE) is the PAC domain. The Histidine kinase domain maps to 383–602 (NVSHELRTPL…TITFTLPYKE (220 aa)). Residue H386 is modified to Phosphohistidine; by autocatalysis.

Homodimer. Interacts with YycH and YycI. In terms of processing, autophosphorylated.

The protein resides in the cell membrane. It catalyses the reaction ATP + protein L-histidine = ADP + protein N-phospho-L-histidine.. Member of the two-component regulatory system WalK/WalR involved in the regulation of the ftsAZ operon, the yocH and ykvT, cwlO, lytE, ydjM, yjeA, yoeB genes and the tagAB and tagDEF operons. Phosphorylates WalR. The polypeptide is Sensor histidine kinase WalK (Bacillus subtilis (strain 168)).